A 361-amino-acid chain; its full sequence is uncharacterized protein (361 aa).

Positions 1–10 (MRRYLKKAKP) are enriched in basic residues. Disordered regions lie at residues 1 to 82 (MRRY…SSFH) and 94 to 147 (ALSH…VNTS). Basic and acidic residues-rich tracts occupy residues 44 to 57 (KEKN…KYEN) and 120 to 134 (FTKK…ESEL). The span at 135 to 147 (QTRSSPPLPVNTS) shows a compositional bias: polar residues. A coiled-coil region spans residues 295-349 (NILTMDEQIQRLKEAIASEKLQQEERSQIIKSLMEEELEINEQEEKIKHSFIDLD).

Its subcellular location is the cytoplasm. It is found in the nucleus. This is an uncharacterized protein from Schizosaccharomyces pombe (strain 972 / ATCC 24843) (Fission yeast).